Here is a 64-residue protein sequence, read N- to C-terminus: Protein DsrB (64 aa).

This sequence belongs to the DsrB family.

In Salmonella enteritidis PT4 (strain P125109), this protein is Protein DsrB.